We begin with the raw amino-acid sequence, 185 residues long: Large ribosomal subunit protein uL13 (185 aa).

Belongs to the universal ribosomal protein uL13 family. Part of the 50S ribosomal subunit.

Functionally, this protein is one of the early assembly proteins of the 50S ribosomal subunit, although it is not seen to bind rRNA by itself. It is important during the early stages of 50S assembly. In Pyrobaculum islandicum (strain DSM 4184 / JCM 9189 / GEO3), this protein is Large ribosomal subunit protein uL13.